The chain runs to 320 residues: ATP-dependent 6-phosphofructokinase (320 aa).

Residue Gly-12 participates in ATP binding. ADP is bound by residues 22–26 and 55–60; these read RGVVR and RYSVSD. Residues 73 to 74 and 103 to 106 contribute to the ATP site; these read RF and GDGS. Asp-104 is a binding site for Mg(2+). 126 to 128 is a binding site for substrate; that stretch reads TID. Asp-128 (proton acceptor) is an active-site residue. Arg-155 provides a ligand contact to ADP. Substrate contacts are provided by residues Arg-163 and 170–172; that span reads MGR. Residues 186-188, Lys-212, and 214-216 each bind ADP; these read GCE and KKH. Substrate is bound by residues Glu-223, Arg-244, and 250-253; that span reads HIQR.

Belongs to the phosphofructokinase type A (PFKA) family. ATP-dependent PFK group I subfamily. Prokaryotic clade 'B1' sub-subfamily. As to quaternary structure, homotetramer. Mg(2+) serves as cofactor.

It localises to the cytoplasm. It catalyses the reaction beta-D-fructose 6-phosphate + ATP = beta-D-fructose 1,6-bisphosphate + ADP + H(+). It participates in carbohydrate degradation; glycolysis; D-glyceraldehyde 3-phosphate and glycerone phosphate from D-glucose: step 3/4. Allosterically activated by ADP and other diphosphonucleosides, and allosterically inhibited by phosphoenolpyruvate. In terms of biological role, catalyzes the phosphorylation of D-fructose 6-phosphate to fructose 1,6-bisphosphate by ATP, the first committing step of glycolysis. The sequence is that of ATP-dependent 6-phosphofructokinase from Cronobacter sakazakii (strain ATCC BAA-894) (Enterobacter sakazakii).